Here is a 163-residue protein sequence, read N- to C-terminus: Transcription antitermination protein NusB (163 aa).

Positions M1–A21 are disordered.

This sequence belongs to the NusB family.

In terms of biological role, involved in transcription antitermination. Required for transcription of ribosomal RNA (rRNA) genes. Binds specifically to the boxA antiterminator sequence of the ribosomal RNA (rrn) operons. The sequence is that of Transcription antitermination protein NusB from Dechloromonas aromatica (strain RCB).